A 1338-amino-acid polypeptide reads, in one-letter code: Serine/threonine-protein kinase cek1 (1338 aa).

One can recognise a PAS domain in the interval Ser28 to Asp98. A disordered region spans residues Pro484–Arg554. Over residues Pro491 to Ser501 the composition is skewed to polar residues. Residue Ser525 is modified to Phosphoserine. Polar residues predominate over residues Pro541–Phe550. The region spanning Tyr589–Phe958 is the Protein kinase domain. Residues Ile595–Val603 and Lys618 contribute to the ATP site. Asp713 functions as the Proton acceptor in the catalytic mechanism. Position 748 is a phosphoserine (Ser748). A compositionally biased stretch (polar residues) spans Glu813 to Pro842. Disordered stretches follow at residues Glu813–Val844, Lys1010–Asn1035, and Ser1159–Asp1185. The region spanning Lys959–Asn1057 is the AGC-kinase C-terminal domain. Residues Ser1159–Ala1174 show a composition bias toward low complexity. The residue at position 1211 (Ser1211) is a Phosphoserine.

It belongs to the protein kinase superfamily. Ser/Thr protein kinase family.

The enzyme catalyses L-seryl-[protein] + ATP = O-phospho-L-seryl-[protein] + ADP + H(+). It carries out the reaction L-threonyl-[protein] + ATP = O-phospho-L-threonyl-[protein] + ADP + H(+). In terms of biological role, may facilitate the progression of anaphase through direct or indirect interaction with the cut8 protein. The sequence is that of Serine/threonine-protein kinase cek1 (cek1) from Schizosaccharomyces pombe (strain 972 / ATCC 24843) (Fission yeast).